Reading from the N-terminus, the 637-residue chain is Chaperone protein HtpG (637 aa).

An a; substrate-binding region spans residues 1-334 (MQDVVNSEKL…SSDLPLNISR (334 aa)). The segment at 335–558 (ETLQNNKVIE…DGSMDIRMER (224 aa)) is b. Residues 559–637 (FLREQKQLNY…MNNVLVKVYQ (79 aa)) form a c region.

The protein belongs to the heat shock protein 90 family. Homodimer.

The protein localises to the cytoplasm. In terms of biological role, molecular chaperone. Has ATPase activity. This Ehrlichia canis (strain Jake) protein is Chaperone protein HtpG.